Here is a 146-residue protein sequence, read N- to C-terminus: Ribosomal RNA large subunit methyltransferase H (146 aa).

S-adenosyl-L-methionine-binding positions include Leu62, Gly94, and 113–118; that span reads LGELTL.

The protein belongs to the RNA methyltransferase RlmH family. In terms of assembly, homodimer.

The protein resides in the cytoplasm. The catalysed reaction is pseudouridine(1915) in 23S rRNA + S-adenosyl-L-methionine = N(3)-methylpseudouridine(1915) in 23S rRNA + S-adenosyl-L-homocysteine + H(+). Functionally, specifically methylates the pseudouridine at position 1915 (m3Psi1915) in 23S rRNA. The sequence is that of Ribosomal RNA large subunit methyltransferase H from Deinococcus radiodurans (strain ATCC 13939 / DSM 20539 / JCM 16871 / CCUG 27074 / LMG 4051 / NBRC 15346 / NCIMB 9279 / VKM B-1422 / R1).